A 211-amino-acid polypeptide reads, in one-letter code: Protein-L-isoaspartate O-methyltransferase (211 aa).

Ser60 is an active-site residue.

The protein belongs to the methyltransferase superfamily. L-isoaspartyl/D-aspartyl protein methyltransferase family.

The protein localises to the cytoplasm. The catalysed reaction is [protein]-L-isoaspartate + S-adenosyl-L-methionine = [protein]-L-isoaspartate alpha-methyl ester + S-adenosyl-L-homocysteine. In terms of biological role, catalyzes the methyl esterification of L-isoaspartyl residues in peptides and proteins that result from spontaneous decomposition of normal L-aspartyl and L-asparaginyl residues. It plays a role in the repair and/or degradation of damaged proteins. The sequence is that of Protein-L-isoaspartate O-methyltransferase from Pseudomonas syringae pv. syringae (strain B728a).